The following is a 222-amino-acid chain: MKNLAIFDLDNTLINTDSDHAWPQYLIKKGLVDAAETEAQNEKFYRDYQNGCLDIDAFLKFHLAPLARYSKEELAEFHREFMAEYIIPHISPMQRMLVQSHQMAGDETLVISSTNEFIITPVCHLFGITNIIGTQLETGSDGRYTGNYIGTPSLKEGKITRLNQWLAERGETLQSYGKTYFYSDSKNDLPLLRLVSEPVAVNPDAELEKEAKEKGWPVLNFK.

Residue Asp8 is the Nucleophile of the active site. Asp8, Asp10, and Asp184 together coordinate Mg(2+). The Proton donor role is filled by Asp10.

It belongs to the HAD-like hydrolase superfamily. SerB family. It depends on Mg(2+) as a cofactor.

The catalysed reaction is L-histidinol phosphate + H2O = L-histidinol + phosphate. It functions in the pathway amino-acid biosynthesis; L-histidine biosynthesis; L-histidine from 5-phospho-alpha-D-ribose 1-diphosphate: step 8/9. Its function is as follows. Catalyzes the dephosphorylation of histidinol-phosphate to histidinol, the direct precursor of histidine. In Neisseria meningitidis serogroup C (strain 8013), this protein is Histidinol-phosphatase.